An 83-amino-acid polypeptide reads, in one-letter code: Toxin TdNa3 (83 aa).

Residues 1-20 (MKGMIMLISCLMLIDVVVES) form the signal peptide. An LCN-type CS-alpha/beta domain is found at 21 to 82 (KNGYIIEPKG…IFDYYNNKCG (62 aa)). Intrachain disulfides connect Cys31–Cys81, Cys35–Cys57, Cys43–Cys62, and Cys47–Cys64. At Cys81 the chain carries Cysteine amide.

This sequence belongs to the long (4 C-C) scorpion toxin superfamily. Sodium channel inhibitor family. Beta subfamily. Expressed by the venom gland.

The protein localises to the secreted. In terms of biological role, inhibits the sodium currents (Nav) in an apparent irreversible manner. Produces small depolarization and induces repetitive firing in squid axons. Is specific for arthropods (crickets, triatomides, crabs and squids), but is non-toxic to mice. This is Toxin TdNa3 from Tityus discrepans (Venezuelan scorpion).